A 319-amino-acid chain; its full sequence is Alpha/beta-gliadin A-V (319 aa).

The N-terminal stretch at 1–20 (MKTFLILALLAIVATTATTA) is a signal peptide. The segment covering 28–58 (LQPQNPSQQQPQEQVPLVQQQQFPGQQQQFP) has biased composition (low complexity). 2 disordered regions span residues 28–125 (LQPQ…QQAQ) and 258–278 (SQVS…VQPQ). 2 stretches are compositionally biased toward pro residues: residues 59–71 (PQQP…PFPS) and 81–104 (FPQP…PQQP). Low complexity predominate over residues 105–125 (YPQQQPQYLQPQQPISQQQAQ). The segment covering 267–278 (LNPQAQGSVQPQ) has biased composition (polar residues).

This sequence belongs to the gliadin/glutenin family. In terms of processing, substrate of transglutaminase.

Its function is as follows. Gliadin is the major seed storage protein in wheat. This is Alpha/beta-gliadin A-V from Triticum aestivum (Wheat).